The sequence spans 199 residues: Large ribosomal subunit protein eL13B (199 aa).

Residues threonine 144 and threonine 152 each carry the phosphothreonine modification.

Belongs to the eukaryotic ribosomal protein eL13 family. Component of the large ribosomal subunit (LSU). Mature yeast ribosomes consist of a small (40S) and a large (60S) subunit. The 40S small subunit contains 1 molecule of ribosomal RNA (18S rRNA) and 33 different proteins (encoded by 57 genes). The large 60S subunit contains 3 rRNA molecules (25S, 5.8S and 5S rRNA) and 46 different proteins (encoded by 81 genes).

Its subcellular location is the cytoplasm. Its function is as follows. Component of the ribosome, a large ribonucleoprotein complex responsible for the synthesis of proteins in the cell. The small ribosomal subunit (SSU) binds messenger RNAs (mRNAs) and translates the encoded message by selecting cognate aminoacyl-transfer RNA (tRNA) molecules. The large subunit (LSU) contains the ribosomal catalytic site termed the peptidyl transferase center (PTC), which catalyzes the formation of peptide bonds, thereby polymerizing the amino acids delivered by tRNAs into a polypeptide chain. The nascent polypeptides leave the ribosome through a tunnel in the LSU and interact with protein factors that function in enzymatic processing, targeting, and the membrane insertion of nascent chains at the exit of the ribosomal tunnel. In Saccharomyces cerevisiae (strain ATCC 204508 / S288c) (Baker's yeast), this protein is Large ribosomal subunit protein eL13B.